Reading from the N-terminus, the 205-residue chain is Dephospho-CoA kinase (205 aa).

Residues 4–203 (KIGITGGIGS…QKIHYLCSAK (200 aa)) form the DPCK domain. An ATP-binding site is contributed by 12-17 (GSGKSV).

It belongs to the CoaE family.

The protein resides in the cytoplasm. The enzyme catalyses 3'-dephospho-CoA + ATP = ADP + CoA + H(+). Its pathway is cofactor biosynthesis; coenzyme A biosynthesis; CoA from (R)-pantothenate: step 5/5. Functionally, catalyzes the phosphorylation of the 3'-hydroxyl group of dephosphocoenzyme A to form coenzyme A. This is Dephospho-CoA kinase from Bacteroides fragilis (strain YCH46).